Reading from the N-terminus, the 442-residue chain is 3-phosphoshikimate 1-carboxyvinyltransferase (442 aa).

3-phosphoshikimate is bound by residues K25, S26, and R30. K25 provides a ligand contact to phosphoenolpyruvate. G97 and R125 together coordinate phosphoenolpyruvate. S170, Q172, D323, and K350 together coordinate 3-phosphoshikimate. Residue Q172 participates in phosphoenolpyruvate binding. The active-site Proton acceptor is the D323. R354 and R399 together coordinate phosphoenolpyruvate.

It belongs to the EPSP synthase family. As to quaternary structure, monomer.

Its subcellular location is the cytoplasm. It carries out the reaction 3-phosphoshikimate + phosphoenolpyruvate = 5-O-(1-carboxyvinyl)-3-phosphoshikimate + phosphate. It participates in metabolic intermediate biosynthesis; chorismate biosynthesis; chorismate from D-erythrose 4-phosphate and phosphoenolpyruvate: step 6/7. Functionally, catalyzes the transfer of the enolpyruvyl moiety of phosphoenolpyruvate (PEP) to the 5-hydroxyl of shikimate-3-phosphate (S3P) to produce enolpyruvyl shikimate-3-phosphate and inorganic phosphate. This is 3-phosphoshikimate 1-carboxyvinyltransferase from Bartonella henselae (strain ATCC 49882 / DSM 28221 / CCUG 30454 / Houston 1) (Rochalimaea henselae).